A 191-amino-acid chain; its full sequence is Flagellar transcriptional regulator FlhC (191 aa).

Zn(2+) is bound by residues C137, C140, C157, and C160.

It belongs to the FlhC family. Heterohexamer composed of two FlhC and four FlhD subunits. Each FlhC binds a FlhD dimer, forming a heterotrimer, and a hexamer assembles by dimerization of two heterotrimers. Zn(2+) serves as cofactor.

It is found in the cytoplasm. In terms of biological role, functions in complex with FlhD as a master transcriptional regulator that regulates transcription of several flagellar and non-flagellar operons by binding to their promoter region. Activates expression of class 2 flagellar genes, including fliA, which is a flagellum-specific sigma factor that turns on the class 3 genes. Also regulates genes whose products function in a variety of physiological pathways. The protein is Flagellar transcriptional regulator FlhC of Nitrosomonas eutropha (strain DSM 101675 / C91 / Nm57).